Consider the following 194-residue polypeptide: Imidazoleglycerol-phosphate dehydratase (194 aa).

The protein belongs to the imidazoleglycerol-phosphate dehydratase family.

The protein localises to the cytoplasm. The enzyme catalyses D-erythro-1-(imidazol-4-yl)glycerol 3-phosphate = 3-(imidazol-4-yl)-2-oxopropyl phosphate + H2O. It functions in the pathway amino-acid biosynthesis; L-histidine biosynthesis; L-histidine from 5-phospho-alpha-D-ribose 1-diphosphate: step 6/9. The chain is Imidazoleglycerol-phosphate dehydratase from Sulfurisphaera tokodaii (strain DSM 16993 / JCM 10545 / NBRC 100140 / 7) (Sulfolobus tokodaii).